The primary structure comprises 392 residues: Casein kinase II subunit alpha (392 aa).

Residues 39–324 (YQLVRKLGRG…AREAMDHPYF (286 aa)) form the Protein kinase domain. ATP is bound by residues 45–53 (LGRGKYSEV) and lysine 68. Aspartate 156 (proton acceptor) is an active-site residue. A disordered region spans residues 334–355 (MGGSNMPSGSSTPVSSASMMSG). A compositionally biased stretch (low complexity) spans 337 to 354 (SNMPSGSSTPVSSASMMS).

The protein belongs to the protein kinase superfamily. Ser/Thr protein kinase family. CK2 subfamily. As to quaternary structure, tetramer composed of an alpha chain, an alpha' and two beta chains.

Its subcellular location is the nucleus. The catalysed reaction is L-seryl-[protein] + ATP = O-phospho-L-seryl-[protein] + ADP + H(+). The enzyme catalyses L-threonyl-[protein] + ATP = O-phospho-L-threonyl-[protein] + ADP + H(+). In terms of biological role, catalytic subunit of a constitutively active serine/threonine-protein kinase complex that phosphorylates a large number of substrates containing acidic residues C-terminal to the phosphorylated serine or threonine. Regulates numerous cellular processes, such as cell cycle progression, apoptosis and transcription, as well as viral infection. May act as a regulatory node which integrates and coordinates numerous signals leading to an appropriate cellular response. During mitosis, functions as a component of the p53/TP53-dependent spindle assembly checkpoint (SAC) that maintains cyclin-B-CDK1 activity and G2 arrest in response to spindle damage. Can also negatively regulate apoptosis. Phosphorylates the caspases CASP9 and CASP2 and the apoptotic regulator NOL3. Phosphorylation protects CASP9 from cleavage and activation by CASP8, and inhibits the dimerization of CASP2 and activation of CASP8. Plays an important role in the circadian clock function by phosphorylating BMAL1. This is Casein kinase II subunit alpha (csnk2a1) from Xenopus laevis (African clawed frog).